The following is a 205-amino-acid chain: 7-methyl-GTP pyrophosphatase (205 aa).

The Proton acceptor role is filled by Asp79.

Belongs to the Maf family. YceF subfamily. A divalent metal cation is required as a cofactor.

Its subcellular location is the cytoplasm. It carries out the reaction N(7)-methyl-GTP + H2O = N(7)-methyl-GMP + diphosphate + H(+). Its function is as follows. Nucleoside triphosphate pyrophosphatase that hydrolyzes 7-methyl-GTP (m(7)GTP). May have a dual role in cell division arrest and in preventing the incorporation of modified nucleotides into cellular nucleic acids. The polypeptide is 7-methyl-GTP pyrophosphatase (Paraburkholderia xenovorans (strain LB400)).